The following is a 309-amino-acid chain: Homoserine kinase (309 aa).

Residue 91–101 (PIGSGLGSSAC) participates in ATP binding.

This sequence belongs to the GHMP kinase family. Homoserine kinase subfamily.

Its subcellular location is the cytoplasm. The catalysed reaction is L-homoserine + ATP = O-phospho-L-homoserine + ADP + H(+). Its pathway is amino-acid biosynthesis; L-threonine biosynthesis; L-threonine from L-aspartate: step 4/5. In terms of biological role, catalyzes the ATP-dependent phosphorylation of L-homoserine to L-homoserine phosphate. The protein is Homoserine kinase of Escherichia fergusonii (strain ATCC 35469 / DSM 13698 / CCUG 18766 / IAM 14443 / JCM 21226 / LMG 7866 / NBRC 102419 / NCTC 12128 / CDC 0568-73).